Here is a 368-residue protein sequence, read N- to C-terminus: Transcription factor TGA7 (368 aa).

Positions 70–82 are enriched in polar residues; sequence HNQIEAEQPSSND. Residues 70 to 89 form a disordered region; sequence HNQIEAEQPSSNDNQDDDGR. The bZIP domain occupies 91-151; sequence HDKMKRRLAQ…LGPSGSINTG (61 aa). Coiled coils occupy residues 92 to 142 and 252 to 285; these read DKMK…QGHL and DQQI…SLAE. The tract at residues 93 to 113 is basic motif; sequence KMKRRLAQNREAARKSRLRKK. Residues 119–133 are leucine-zipper; the sequence is LEESRLKLSQLEQEL. One can recognise a DOG1 domain in the interval 152–363; the sequence is IASFEMEYSH…RALSSLWAAR (212 aa).

The protein belongs to the bZIP family. In terms of assembly, binds DNA as a dimer. Interacts with NPR1 and NPR4. Interacts with GRXC7/ROXY1.

It localises to the nucleus. Its function is as follows. Transcriptional activator that binds specifically to the DNA sequence 5'-TGACG-3'. Recognizes ocs elements like the as-1 motif of the cauliflower mosaic virus 35S promoter. Binding to the as-1-like cis elements mediate auxin- and salicylic acid-inducible transcription. May be involved in the induction of the systemic acquired resistance (SAR) via its interaction with NPR1. The chain is Transcription factor TGA7 (TGA7) from Arabidopsis thaliana (Mouse-ear cress).